The chain runs to 487 residues: MAAALPRTLGELQLYRILQKANLLSYFDAFIQQGGDDVQQLCEAGEEEFLEIMALVGMASKPLHVRRLQKALRDWVTNPGLFNQPLTSLPVSSIPIYKLPEGSPTWLGISCSSYERSSNAREPHLKIPKCAATTCVQSLGQGKSDVVGSLALQSVGESRLWQGHHATESEHSLSPADLGSPASPKESSEALDAAAALSVAECVERMAPTLPKSDLNEVKELLKTNKKLAKMIGHIFEMNDDDPHKEEEIRKYSAIYGRFDSKRKDGKHLTLHELTVNEAAAQLCVKDNALLTRRDELFALARQISREVTYKYTYRTTKSKCGERDELSPKRIKVEDGFPDFQDSVQTLFQQARAKSEELAALSSQQPEKVMAKQMEFLCNQAGYERLQHAERRLSAGLYRQSSEEHSPNGLTSDNSDGQGERPLNLRMPNLQNRQPHHFVVDGELSRLYPSEAKSHSSESLGILKDYPHSAFTLEKKVIKTEPEDSR.

Residues 4–82 (ALPRTLGELQ…RDWVTNPGLF (79 aa)) are NCD1. Glycyl lysine isopeptide (Lys-Gly) (interchain with G-Cter in SUMO2) cross-links involve residues lysine 126, lysine 129, and lysine 143. Residues 162 to 188 (QGHHATESEHSLSPADLGSPASPKESS) are disordered. Phosphoserine occurs at positions 172 and 183. Lysine 212 participates in a covalent cross-link: Glycyl lysine isopeptide (Lys-Gly) (interchain with G-Cter in SUMO2). The segment at 221-310 (LLKTNKKLAK…ARQISREVTY (90 aa)) is NCD2. Residues 307–338 (EVTYKYTYRTTKSKCGERDELSPKRIKVEDGF) are necessary for nuclear localization. Serine 328 is modified (phosphoserine). Lysine 333 is covalently cross-linked (Glycyl lysine isopeptide (Lys-Gly) (interchain with G-Cter in SUMO1); alternate). A Glycyl lysine isopeptide (Lys-Gly) (interchain with G-Cter in SUMO2); alternate cross-link involves residue lysine 333. Residues lysine 355, lysine 369, and lysine 373 each participate in a glycyl lysine isopeptide (Lys-Gly) (interchain with G-Cter in SUMO2) cross-link. A disordered region spans residues 399–434 (YRQSSEEHSPNGLTSDNSDGQGERPLNLRMPNLQNR). The residue at position 407 (serine 407) is a Phosphoserine. Polar residues predominate over residues 409–418 (NGLTSDNSDG). Residues lysine 454, lysine 465, and lysine 477 each participate in a glycyl lysine isopeptide (Lys-Gly) (interchain with G-Cter in SUMO2) cross-link. Residue lysine 480 forms a Glycyl lysine isopeptide (Lys-Gly) (interchain with G-Cter in SUMO1); alternate linkage. Lysine 480 is covalently cross-linked (Glycyl lysine isopeptide (Lys-Gly) (interchain with G-Cter in SUMO2); alternate).

Belongs to the NAB family. As to quaternary structure, homomultimers may associate with EGR1 bound to DNA. Isoform Short is found in myeloid leukemia cell line KG-1.

Its subcellular location is the nucleus. In terms of biological role, acts as a transcriptional repressor for zinc finger transcription factors EGR1 and EGR2. This is NGFI-A-binding protein 1 (NAB1) from Homo sapiens (Human).